A 121-amino-acid chain; its full sequence is Apoptin (121 aa).

Disordered regions lie at residues 1 to 28 (MNAL…LETP) and 57 to 121 (LRSA…RIRL). A compositionally biased stretch (polar residues) spans 58-70 (RSATADNSESTGF). Basic and acidic residues predominate over residues 88 to 102 (RSCDPSEYRVSELKE).

It belongs to the gyrovirus apoptin family.

The protein localises to the host nucleus. Its function is as follows. May act as transcriptional regulator. Induces apoptosis in infected cells. Element of infectious replication cycle. The polypeptide is Apoptin (VP3) (Gallus gallus (Chicken)).